The following is a 164-amino-acid chain: MKSVITTVISAADSAGRFPSSSDLESVQGNIQRASARLEAAEKLASNHEAVVKEAGDACFGKYGYLKNPGEAGENQEKINKCYRDIDHYMRLVNYSLVIGGTGPLDEWGIAGAREVYRTLNLPTSAYIAAFAFTRDRLCGPRDMSAQAGVEYSTALDYIINSLS.

Positions 47, 81, 82, 84, 88, 137, 139, and 142 each coordinate (2R,3E)-phycoerythrobilin.

This sequence belongs to the phycobiliprotein family. Heterododecamer of 6 alpha and 6 beta chains. The basic functional unit of phycobiliproteins is a ring-shaped hexamer formed from two back-to-back trimers contacting via the alpha chain subunits. The trimers are composed of alpha/beta subunit heterodimers arranged around a three-fold axis of symmetry. The phycoerythrins also contain a gamma subunit which is located in the center of the hexamer. Contains two covalently linked phycoerythrobilin chromophores.

It is found in the plastid. The protein resides in the chloroplast thylakoid membrane. In terms of biological role, light-harvesting photosynthetic tetrapyrrole chromophore-protein from the phycobiliprotein complex. This is R-phycoerythrin alpha chain (rpeA) from Agarophyton chilense (Red seaweed).